The following is a 279-amino-acid chain: uncharacterized protein (279 aa).

This sequence belongs to the peptidase C59 family.

This is an uncharacterized protein from Chlorella (PBCV-1).